A 153-amino-acid chain; its full sequence is UPF0225 protein ETA_15740 (153 aa).

The protein belongs to the UPF0225 family.

The polypeptide is UPF0225 protein ETA_15740 (Erwinia tasmaniensis (strain DSM 17950 / CFBP 7177 / CIP 109463 / NCPPB 4357 / Et1/99)).